Consider the following 253-residue polypeptide: uncharacterized protein (253 aa).

Residues 1–15 (MNRVILFHFHFFKNA) form the signal peptide.

This is an uncharacterized protein from Archaeoglobus fulgidus (strain ATCC 49558 / DSM 4304 / JCM 9628 / NBRC 100126 / VC-16).